Here is a 262-residue protein sequence, read N- to C-terminus: 5'-nucleotidase SurE (262 aa).

A divalent metal cation-binding residues include D11, D12, S43, and N101. Positions 220–229 (SAGDGPKEWP) are enriched in basic and acidic residues. The tract at residues 220–246 (SAGDGPKEWPSDVSQIETNSPSLTPIQ) is disordered. Residues 231–244 (DVSQIETNSPSLTP) show a composition bias toward polar residues.

The protein belongs to the SurE nucleotidase family. Requires a divalent metal cation as cofactor.

It is found in the cytoplasm. It catalyses the reaction a ribonucleoside 5'-phosphate + H2O = a ribonucleoside + phosphate. Functionally, nucleotidase that shows phosphatase activity on nucleoside 5'-monophosphates. The protein is 5'-nucleotidase SurE of Prochlorococcus marinus (strain SARG / CCMP1375 / SS120).